Consider the following 266-residue polypeptide: Expansin-A13 (266 aa).

The first 19 residues, 1–19 (MQRFLLPLLFLALSPPAIC), serve as a signal peptide directing secretion. An Expansin-like EG45 domain is found at 58 to 171 (GGACGYGDLV…RRINCRKEGS (114 aa)). Positions 181-260 (IFISVLITNV…NWNYGQTFEG (80 aa)) constitute an Expansin-like CBD domain.

Belongs to the expansin family. Expansin A subfamily.

The protein resides in the secreted. It localises to the cell wall. The protein localises to the membrane. Causes loosening and extension of plant cell walls by disrupting non-covalent bonding between cellulose microfibrils and matrix glucans. No enzymatic activity has been found. The sequence is that of Expansin-A13 (EXPA13) from Arabidopsis thaliana (Mouse-ear cress).